The primary structure comprises 687 residues: Chloride channel protein ClC-Kb (687 aa).

Residues 1-50 (MEEFVGLREGSSGNPVTLQELWGPCPRIRRGIRGGLEWLKQKLFRLGEDW) lie on the Cytoplasmic side of the membrane. 2 consecutive transmembrane segments (helical) span residues 51 to 82 (YFLM…QWLY) and 91 to 111 (LRYL…SGFS). The helical intramembrane region spans 116-127 (PSSGGSGIPEVK). Residue Ser121 coordinates chloride. 2 consecutive transmembrane segments (helical) span residues 141–160 (IKNF…CGST) and 161–180 (LFLG…AAYL). A glycan (N-linked (GlcNAc...) asparagine) is linked at Asn193. An intramembrane region (helical) is located at residues 203-224 (AAAAVGVATVFAAPFSGVLFSI). The helical transmembrane segment at 236-255 (YWRGFFAATCGAFMFRLLAV) threads the bilayer. The Ca(2+) site is built by Glu259, Glu261, Asp278, and Glu281. The next 2 helical transmembrane spans lie at 282–310 (IFFF…FGFI) and 325–342 (PVYS…TYPP). The helical intramembrane region spans 349 to 360 (ASRLSMKQHLDS). Helical transmembrane passes span 400-420 (GTLA…TTIP) and 421-440 (MPAG…GRLF). Position 426 (Phe426) interacts with chloride. An intramembrane region (helical) is located at residues 464 to 496 (GGYALAGAAAFSGAVTHTISTALLAFEVTGQIV). Residues 500–520 (PVLMAVLAANAIAQSCQPSFY) traverse the membrane as a helical segment. Residues 521-687 (DGTVIVKKLP…SNLTNPPAPK (167 aa)) lie on the Cytoplasmic side of the membrane. CBS domains lie at 551–609 (MNHS…EPPS) and 626–684 (CPTE…TNPP).

The protein belongs to the chloride channel (TC 2.A.49) family. CLCNKB subfamily. As to quaternary structure, homodimer. Interacts with BSND. In terms of processing, N-glycosylated.

The protein resides in the basolateral cell membrane. It carries out the reaction chloride(in) = chloride(out). The catalysed reaction is iodide(out) = iodide(in). The enzyme catalyses nitrate(in) = nitrate(out). It catalyses the reaction bromide(in) = bromide(out). Its activity is regulated as follows. Activated by extracellular Ca(2+) and inhibited by extracellular acidic pH. Functionally, anion-selective channel permeable to small monovalent anions with ion selectivity for chloride &gt; bromide &gt; nitrate &gt; iodide. Forms a homodimeric channel where each subunit has its own ion conduction pathway. May conduct double-barreled currents controlled by two types of gates, two fast gates that control each subunit independently and a slow common gate that opens and shuts off both subunits simultaneously. Assembles with the regulatory subunit BSND/Barttin for sorting at the basolateral plasma membrane domain and functional switch to the ion conducting state. CLCNKB:BSND channels display mostly a linear current-voltage relationship controlled by common gate. Mediates chloride conductance along nephron segments, namely the thick ascending limb of Henle's loop, convoluted tubule and the collecting duct, contributing to the maintenance of systemic acid-base and electrolyte homeostasis. Conducts chloride currents in the stria vascularis of the inner ear to establish the endocochlear potential necessary for normal hearing. The chain is Chloride channel protein ClC-Kb from Homo sapiens (Human).